The chain runs to 671 residues: UvrABC system protein B (671 aa).

Positions 25 to 178 (EGIKKGYKHQ…DAMLKKLVEI (154 aa)) constitute a Helicase ATP-binding domain. 38–45 (GVTGSGKT) contacts ATP. A Beta-hairpin motif is present at residues 91-114 (YYDYYQPEAYIPETDTYIEKDALI). The 167-residue stretch at 435 to 601 (QVEDLLEEIH…TVKSKIKDIL (167 aa)) folds into the Helicase C-terminal domain. Residues 626-661 (EETIKKLEQEMKHAAENLEFEKAAEIRDKIFKIKEK) form the UVR domain.

Belongs to the UvrB family. Forms a heterotetramer with UvrA during the search for lesions. Interacts with UvrC in an incision complex.

The protein localises to the cytoplasm. Functionally, the UvrABC repair system catalyzes the recognition and processing of DNA lesions. A damage recognition complex composed of 2 UvrA and 2 UvrB subunits scans DNA for abnormalities. Upon binding of the UvrA(2)B(2) complex to a putative damaged site, the DNA wraps around one UvrB monomer. DNA wrap is dependent on ATP binding by UvrB and probably causes local melting of the DNA helix, facilitating insertion of UvrB beta-hairpin between the DNA strands. Then UvrB probes one DNA strand for the presence of a lesion. If a lesion is found the UvrA subunits dissociate and the UvrB-DNA preincision complex is formed. This complex is subsequently bound by UvrC and the second UvrB is released. If no lesion is found, the DNA wraps around the other UvrB subunit that will check the other stand for damage. The polypeptide is UvrABC system protein B (Thermodesulfovibrio yellowstonii (strain ATCC 51303 / DSM 11347 / YP87)).